A 552-amino-acid chain; its full sequence is HTH-type transcriptional regulator SgrR (552 aa).

The HTH marR-type domain occupies 1–116 (MPSGRLQQQF…LISHLGRSFR (116 aa)). Residues 26–49 (LNELADLLNCSRRHMRTLLNTMQA) constitute a DNA-binding region (H-T-H motif). A solute-binding region spans residues 163-493 (ELEADIAHHW…RDWQDDAAQW (331 aa)).

In terms of biological role, activates the small RNA gene sgrS under glucose-phosphate stress conditions as well as yfdZ. Represses its own transcription under both stress and non-stress conditions. Might act as a sensor of the intracellular accumulation of phosphoglucose by binding these molecules in its C-terminal solute-binding domain. The protein is HTH-type transcriptional regulator SgrR of Salmonella typhi.